The primary structure comprises 433 residues: ACT domain-containing protein ACR6 (433 aa).

ACT domains are found at residues 30–110, 120–207, 250–326, and 328–402; these read VIQV…RSSV, SIEL…SCSD, VVTM…ASEG, and ELEL…VKKK.

In terms of biological role, may bind amino acids. The polypeptide is ACT domain-containing protein ACR6 (Arabidopsis thaliana (Mouse-ear cress)).